We begin with the raw amino-acid sequence, 130 residues long: Small ribosomal subunit protein uS8 (130 aa).

It belongs to the universal ribosomal protein uS8 family. As to quaternary structure, part of the 30S ribosomal subunit. Contacts proteins S5 and S12.

Functionally, one of the primary rRNA binding proteins, it binds directly to 16S rRNA central domain where it helps coordinate assembly of the platform of the 30S subunit. The chain is Small ribosomal subunit protein uS8 from Pseudomonas fluorescens (strain ATCC BAA-477 / NRRL B-23932 / Pf-5).